The chain runs to 170 residues: Double homeobox protein 1 (170 aa).

DNA-binding regions (homeobox) lie at residues 19-78 and 94-153; these read GRRM…LRQH and GRRK…RGQS. The segment at 75–100 is disordered; it reads LRQHRRQSRPWPGRRDPQKGRRKRTA.

It belongs to the paired homeobox family. In terms of tissue distribution, expressed in rhabdomyosarcoma TE671 cells as well as in several other normal and cancer cells.

The protein localises to the nucleus. Functionally, probable transcription activator. Binds the P5 DNA element sequence 5'-GATCTGAGTCTAATTGAGAATTACTGTAC-3'. This Homo sapiens (Human) protein is Double homeobox protein 1 (DUX1).